A 135-amino-acid polypeptide reads, in one-letter code: Small ribosomal subunit protein uS12 (135 aa).

The segment at 1–24 is disordered; that stretch reads MPTINQLVRKGRHSKTTKSKSPAL. The segment covering 9–18 has biased composition (basic residues); the sequence is RKGRHSKTTK. A 3-methylthioaspartic acid modification is found at D102.

The protein belongs to the universal ribosomal protein uS12 family. As to quaternary structure, part of the 30S ribosomal subunit. Contacts proteins S8 and S17. May interact with IF1 in the 30S initiation complex.

In terms of biological role, with S4 and S5 plays an important role in translational accuracy. Functionally, interacts with and stabilizes bases of the 16S rRNA that are involved in tRNA selection in the A site and with the mRNA backbone. Located at the interface of the 30S and 50S subunits, it traverses the body of the 30S subunit contacting proteins on the other side and probably holding the rRNA structure together. The combined cluster of proteins S8, S12 and S17 appears to hold together the shoulder and platform of the 30S subunit. The sequence is that of Small ribosomal subunit protein uS12 from Lactobacillus delbrueckii subsp. bulgaricus (strain ATCC 11842 / DSM 20081 / BCRC 10696 / JCM 1002 / NBRC 13953 / NCIMB 11778 / NCTC 12712 / WDCM 00102 / Lb 14).